The primary structure comprises 467 residues: 3-isopropylmalate dehydratase large subunit (467 aa).

Residues C348, C409, and C412 each coordinate [4Fe-4S] cluster.

This sequence belongs to the aconitase/IPM isomerase family. LeuC type 1 subfamily. In terms of assembly, heterodimer of LeuC and LeuD. It depends on [4Fe-4S] cluster as a cofactor.

It carries out the reaction (2R,3S)-3-isopropylmalate = (2S)-2-isopropylmalate. It participates in amino-acid biosynthesis; L-leucine biosynthesis; L-leucine from 3-methyl-2-oxobutanoate: step 2/4. Functionally, catalyzes the isomerization between 2-isopropylmalate and 3-isopropylmalate, via the formation of 2-isopropylmaleate. This Magnetococcus marinus (strain ATCC BAA-1437 / JCM 17883 / MC-1) protein is 3-isopropylmalate dehydratase large subunit.